The chain runs to 1039 residues: Protein male-specific lethal-1 (1039 aa).

A compositionally biased stretch (basic residues) spans 1–13 (MDKRFKWPPKKRA). 2 disordered regions span residues 1 to 44 (MDKR…HLHQ) and 171 to 199 (RRKN…QKLI). Ser-18 carries the post-translational modification Phosphoserine. Ser-238 carries the post-translational modification Phosphoserine. Disordered regions lie at residues 244–266 (HAGA…GEFN), 358–454 (GQSV…GNQN), 485–691 (KKDK…EIDV), and 729–799 (IYPP…SSTT). The span at 255–266 (KRSESKGRGEFN) shows a compositional bias: basic and acidic residues. Over residues 368 to 392 (EEDDDEDDEDDENSDKDDDSEEDDY) the composition is skewed to acidic residues. Basic and acidic residues predominate over residues 397–407 (SDADVNARTEE). Residues 431 to 445 (AHSTPNHQQKSSTQA) show a composition bias toward polar residues. Position 433 is a phosphoserine (Ser-433). Thr-434 carries the post-translational modification Phosphothreonine. A phosphoserine mark is found at Ser-492 and Ser-496. 2 stretches are compositionally biased toward basic and acidic residues: residues 504–515 (PHQEDAIVDHNA) and 523–570 (PKPD…DAPK). 2 stretches are compositionally biased toward polar residues: residues 581 to 592 (TKTSSRESTLPK) and 609 to 625 (NHQS…TQRL). A Phosphoserine modification is found at Ser-585. Thr-659 carries the phosphothreonine modification. Ser-682 and Ser-684 each carry phosphoserine. The residue at position 747 (Thr-747) is a Phosphothreonine. Position 749 is a phosphoserine (Ser-749). A phosphothreonine mark is found at Thr-750, Thr-751, and Thr-753. Residues 759-768 (QHAVTSSMDQ) show a composition bias toward polar residues. Residues Ser-764 and Ser-765 each carry the phosphoserine modification. Thr-788 carries the phosphothreonine modification. Ser-810 carries the phosphoserine modification. Thr-813 and Thr-832 each carry phosphothreonine. In terms of domain architecture, PEHE spans 865-983 (SLEIPKWRDV…EARDDFGVPW (119 aa)). Phosphoserine is present on residues Ser-879 and Ser-889. The segment at 886-904 (ELLSDATFERRHQKYVKDE) is interaction with mof HAT domain. The segment at 1011–1039 (IPTTAAEARHQENHSSYVFPKRRKRQKNR) is disordered. At Thr-1014 the chain carries Phosphothreonine. Ser-1025 is modified (phosphoserine). The segment covering 1030–1039 (PKRRKRQKNR) has biased composition (basic residues). A Nuclear localization signal motif is present at residues 1032 to 1037 (RRKRQK).

This sequence belongs to the msl-1 family. In terms of assembly, component of the male-specific lethal (MSL) histone acetyltransferase complex, composed of mof, mle, msl-1, msl-2 and msl-3 proteins, as well as roX1 and roX2 non-coding RNAs. Interacts (via PEHE domain) with mof (via HAT domain) and msl-3 (via MRG domain); both interactions are direct. Interacts with tamo via the nuclear localization signal. Component of a maternal MSL subcomplex composed of mof, msl-1 and msl-3. In terms of processing, phosphorylation at Ser-18, Thr743, Thr-747 and Thr-751 is required to promote phosphorylation of 'Ser-5' of the C-terminal heptapeptide repeat domain (CTD) of the largest RNA polymerase II subunit Polr2A. Phosphorylated by Cdk7 in vitro. In contrast, phosphorylation at Ser-18, Thr743, Thr-747 and Thr-751 does not affect its role in dosage compensation in males. Ubiquitinated by msl-2.

It localises to the nucleus. It is found in the chromosome. In terms of biological role, component of the male-specific lethal (MSL) histone acetyltransferase complex, a multiprotein complex essential for elevating transcription of the single X chromosome in the male (X chromosome dosage compensation). The MSL complex specifically associates with the single X chromosome in males and mediates formation of H4K16ac, promoting a two-fold activation of X chromosome. In complex with msl-2, promotes ubiquitination of histone H2B. In addition to its role in dosage compensation in males, regulates the activity of gene promoters: acts together with Cdk7 to promote phosphorylation of 'Ser-5' of the C-terminal heptapeptide repeat domain (CTD) of the largest RNA polymerase II subunit Polr2A. The chain is Protein male-specific lethal-1 from Drosophila melanogaster (Fruit fly).